The sequence spans 272 residues: Acetylglutamate kinase (272 aa).

Substrate is bound by residues 41-42, Arg63, and Asn166; that span reads GG.

The protein belongs to the acetylglutamate kinase family. ArgB subfamily.

It localises to the cytoplasm. The catalysed reaction is N-acetyl-L-glutamate + ATP = N-acetyl-L-glutamyl 5-phosphate + ADP. The protein operates within amino-acid biosynthesis; L-arginine biosynthesis; N(2)-acetyl-L-ornithine from L-glutamate: step 2/4. Its function is as follows. Catalyzes the ATP-dependent phosphorylation of N-acetyl-L-glutamate. This chain is Acetylglutamate kinase, found in Anaeromyxobacter dehalogenans (strain 2CP-1 / ATCC BAA-258).